The chain runs to 151 residues: RNA polymerase-binding transcription factor DksA (151 aa).

A coiled-coil region spans residues 33–54; it reads NEAQLAHFRRILEAWRNQLRDE. 4 residues coordinate Zn(2+): Cys114, Cys117, Cys135, and Cys138. The dksA C4-type zinc-finger motif lies at 114–138; it reads CESCGVEIGIRRLEARPTADLCIDC.

It belongs to the DksA family. As to quaternary structure, interacts directly with the RNA polymerase.

The protein resides in the cytoplasm. Its function is as follows. Transcription factor that acts by binding directly to the RNA polymerase (RNAP). Required for negative regulation of rRNA expression and positive regulation of several amino acid biosynthesis promoters. Also required for regulation of fis expression. This is RNA polymerase-binding transcription factor DksA from Escherichia coli O157:H7.